A 176-amino-acid chain; its full sequence is Large ribosomal subunit protein uL6 (176 aa).

The protein belongs to the universal ribosomal protein uL6 family. In terms of assembly, part of the 50S ribosomal subunit.

In terms of biological role, this protein binds to the 23S rRNA, and is important in its secondary structure. It is located near the subunit interface in the base of the L7/L12 stalk, and near the tRNA binding site of the peptidyltransferase center. The protein is Large ribosomal subunit protein uL6 of Burkholderia lata (strain ATCC 17760 / DSM 23089 / LMG 22485 / NCIMB 9086 / R18194 / 383).